A 550-amino-acid chain; its full sequence is Arginine--tRNA ligase (550 aa).

A 'HIGH' region motif is present at residues 123–133; the sequence is ANPTGYLHIAH.

It belongs to the class-I aminoacyl-tRNA synthetase family. Monomer.

It is found in the cytoplasm. It carries out the reaction tRNA(Arg) + L-arginine + ATP = L-arginyl-tRNA(Arg) + AMP + diphosphate. The sequence is that of Arginine--tRNA ligase from Ureaplasma parvum serovar 3 (strain ATCC 27815 / 27 / NCTC 11736).